Consider the following 142-residue polypeptide: Cytochrome c-type biogenesis protein CcmE (142 aa).

The Cytoplasmic portion of the chain corresponds to 1 to 2 (MK). The helical; Signal-anchor for type II membrane protein transmembrane segment at 3–23 (GKYLLGILVILGALGYMVFGG) threads the bilayer. At 24–142 (LGRNLVYFLT…EVRKLIEEAQ (119 aa)) the chain is on the periplasmic side. Residues histidine 118 and tyrosine 122 each coordinate heme.

The protein belongs to the CcmE/CycJ family.

It is found in the cell inner membrane. Functionally, heme chaperone required for the biogenesis of c-type cytochromes. Transiently binds heme delivered by CcmC and transfers the heme to apo-cytochromes in a process facilitated by CcmF and CcmH. The chain is Cytochrome c-type biogenesis protein CcmE from Thermus thermophilus (strain ATCC BAA-163 / DSM 7039 / HB27).